Reading from the N-terminus, the 359-residue chain is 3-dehydroquinate synthase (359 aa).

NAD(+) contacts are provided by residues 72 to 77 (DGEQYK), 106 to 110 (GVIGD), 130 to 131 (TT), Lys-143, Lys-152, and 170 to 173 (CLKT). Glu-185, His-248, and His-265 together coordinate Zn(2+).

This sequence belongs to the sugar phosphate cyclases superfamily. Dehydroquinate synthase family. The cofactor is Co(2+). Zn(2+) serves as cofactor. It depends on NAD(+) as a cofactor.

It is found in the cytoplasm. The catalysed reaction is 7-phospho-2-dehydro-3-deoxy-D-arabino-heptonate = 3-dehydroquinate + phosphate. It participates in metabolic intermediate biosynthesis; chorismate biosynthesis; chorismate from D-erythrose 4-phosphate and phosphoenolpyruvate: step 2/7. In terms of biological role, catalyzes the conversion of 3-deoxy-D-arabino-heptulosonate 7-phosphate (DAHP) to dehydroquinate (DHQ). The polypeptide is 3-dehydroquinate synthase (Photobacterium profundum (strain SS9)).